We begin with the raw amino-acid sequence, 487 residues long: Serine/threonine-protein kinase BSK7 (487 aa).

Gly2 carries N-myristoyl glycine lipidation. In terms of domain architecture, Protein kinase spans 59–325; sequence ENIVSEHGEK…DLETPSHQLM (267 aa). ATP-binding positions include 65–73 and Lys87; that span reads HGEKAPNVV. Asp181 functions as the Proton acceptor in the catalytic mechanism.

Belongs to the protein kinase superfamily. Ser/Thr protein kinase family.

The protein resides in the cell membrane. The catalysed reaction is L-seryl-[protein] + ATP = O-phospho-L-seryl-[protein] + ADP + H(+). It carries out the reaction L-threonyl-[protein] + ATP = O-phospho-L-threonyl-[protein] + ADP + H(+). Functionally, probable serine/threonine kinase that acts as a positive regulator of brassinosteroid (BR) signaling downstream of the receptor kinase BRI1. Functions redundantly with BSK3, BSK5, BSK6 and BSK8. The protein is Serine/threonine-protein kinase BSK7 of Arabidopsis thaliana (Mouse-ear cress).